The chain runs to 102 residues: NADH-quinone oxidoreductase subunit K (102 aa).

The next 3 helical transmembrane spans lie at 6 to 26 (LEHG…GLMV), 30 to 50 (ILFV…AFIV), and 62 to 82 (VMFI…LAIL).

The protein belongs to the complex I subunit 4L family. As to quaternary structure, NDH-1 is composed of 13 different subunits. Subunits NuoA, H, J, K, L, M, N constitute the membrane sector of the complex.

The protein resides in the cell inner membrane. The catalysed reaction is a quinone + NADH + 5 H(+)(in) = a quinol + NAD(+) + 4 H(+)(out). NDH-1 shuttles electrons from NADH, via FMN and iron-sulfur (Fe-S) centers, to quinones in the respiratory chain. The immediate electron acceptor for the enzyme in this species is believed to be ubiquinone. Couples the redox reaction to proton translocation (for every two electrons transferred, four hydrogen ions are translocated across the cytoplasmic membrane), and thus conserves the redox energy in a proton gradient. This chain is NADH-quinone oxidoreductase subunit K, found in Pseudomonas fluorescens (strain SBW25).